The chain runs to 254 residues: Putative ankyrin-containing lipoprotein Lxx09580 (254 aa).

A signal peptide spans 1–22 (MTEIRYVRLLTLVLASSVLLAG). Cys-23 is lipidated: N-palmitoyl cysteine. Cys-23 is lipidated: S-diacylglycerol cysteine. ANK repeat units follow at residues 56–85 (AATA…AIED), 89–118 (GGRT…DVNA), 122–151 (IQDS…DVNA), 155–184 (FNGT…DLDH), and 188–222 (PGWT…NPDI).

Its subcellular location is the cell membrane. This Leifsonia xyli subsp. xyli (strain CTCB07) protein is Putative ankyrin-containing lipoprotein Lxx09580.